The sequence spans 210 residues: Kalata-B2 (210 aa).

The N-terminal stretch at methionine 1 to glycine 22 is a signal peptide. The propeptide occupies alanine 23–lysine 66. A cross-link (cyclopeptide (Gly-Asp)) is located at residues glycine 67–aspartate 95. Cystine bridges form between cysteine 71–cysteine 85, cysteine 75–cysteine 87, and cysteine 80–cysteine 92. The propeptide occupies serine 96–lysine 120. The segment at residues glycine 121 to aspartate 149 is a cross-link (cyclopeptide (Gly-Asp)). Cystine bridges form between cysteine 125-cysteine 139, cysteine 129-cysteine 141, and cysteine 134-cysteine 146. A propeptide spanning residues serine 150 to lysine 174 is cleaved from the precursor. The cyclopeptide (Gly-Asp) cross-link spans glycine 175 to aspartate 203. Intrachain disulfides connect cysteine 179–cysteine 193, cysteine 183–cysteine 195, and cysteine 188–cysteine 200. The propeptide occupies serine 204 to alanine 210.

Belongs to the cyclotide family. Moebius subfamily. Post-translationally, kalata-B2 is a cyclic peptide which occurs in three forms: with unmodified Trp, with Trp oxidized to form N-formylkynurenine and with Trp oxidized to form kynurenine. Oxidation is enhanced by exposure to sunlight.

Its function is as follows. Probably participates in a plant defense mechanism. Inhibitory effect on the growth and development of larvae from Helicoverpa punctigera. Has hemolytic activity. This Oldenlandia affinis protein is Kalata-B2 (OAK4).